Reading from the N-terminus, the 343-residue chain is Holliday junction branch migration complex subunit RuvB (343 aa).

A large ATPase domain (RuvB-L) region spans residues 1 to 185 (MMNENLDATG…FGISSRLQYY (185 aa)). Residues L24, R25, G66, K69, T70, T71, 132–134 (EDY), R175, Y185, and R222 contribute to the ATP site. T70 serves as a coordination point for Mg(2+). Residues 186 to 256 (STELLSGIVE…IAKFGLKALN (71 aa)) are small ATPAse domain (RuvB-S). Positions 259-343 (AHGLDEMDNK…GSNQGGLFDN (85 aa)) are head domain (RuvB-H). Positions 314 and 319 each coordinate DNA.

This sequence belongs to the RuvB family. As to quaternary structure, homohexamer. Forms an RuvA(8)-RuvB(12)-Holliday junction (HJ) complex. HJ DNA is sandwiched between 2 RuvA tetramers; dsDNA enters through RuvA and exits via RuvB. An RuvB hexamer assembles on each DNA strand where it exits the tetramer. Each RuvB hexamer is contacted by two RuvA subunits (via domain III) on 2 adjacent RuvB subunits; this complex drives branch migration. In the full resolvosome a probable DNA-RuvA(4)-RuvB(12)-RuvC(2) complex forms which resolves the HJ.

The protein resides in the cytoplasm. It carries out the reaction ATP + H2O = ADP + phosphate + H(+). Its function is as follows. The RuvA-RuvB-RuvC complex processes Holliday junction (HJ) DNA during genetic recombination and DNA repair, while the RuvA-RuvB complex plays an important role in the rescue of blocked DNA replication forks via replication fork reversal (RFR). RuvA specifically binds to HJ cruciform DNA, conferring on it an open structure. The RuvB hexamer acts as an ATP-dependent pump, pulling dsDNA into and through the RuvAB complex. RuvB forms 2 homohexamers on either side of HJ DNA bound by 1 or 2 RuvA tetramers; 4 subunits per hexamer contact DNA at a time. Coordinated motions by a converter formed by DNA-disengaged RuvB subunits stimulates ATP hydrolysis and nucleotide exchange. Immobilization of the converter enables RuvB to convert the ATP-contained energy into a lever motion, pulling 2 nucleotides of DNA out of the RuvA tetramer per ATP hydrolyzed, thus driving DNA branch migration. The RuvB motors rotate together with the DNA substrate, which together with the progressing nucleotide cycle form the mechanistic basis for DNA recombination by continuous HJ branch migration. Branch migration allows RuvC to scan DNA until it finds its consensus sequence, where it cleaves and resolves cruciform DNA. The protein is Holliday junction branch migration complex subunit RuvB of Christiangramia forsetii (strain DSM 17595 / CGMCC 1.15422 / KT0803) (Gramella forsetii).